A 206-amino-acid chain; its full sequence is Ribosomal RNA large subunit methyltransferase E (206 aa).

S-adenosyl-L-methionine is bound by residues glycine 55, tryptophan 57, aspartate 75, aspartate 91, and aspartate 116. Lysine 156 serves as the catalytic Proton acceptor.

The protein belongs to the class I-like SAM-binding methyltransferase superfamily. RNA methyltransferase RlmE family.

The protein resides in the cytoplasm. It carries out the reaction uridine(2552) in 23S rRNA + S-adenosyl-L-methionine = 2'-O-methyluridine(2552) in 23S rRNA + S-adenosyl-L-homocysteine + H(+). Its function is as follows. Specifically methylates the uridine in position 2552 of 23S rRNA at the 2'-O position of the ribose in the fully assembled 50S ribosomal subunit. The protein is Ribosomal RNA large subunit methyltransferase E of Blochmanniella floridana.